The following is a 115-amino-acid chain: Probable non-functional T cell receptor beta variable 23-1 (115 aa).

Residues 1 to 21 (MGTRLLGCAALCLLAADSFHA) form the signal peptide. Residues 22-115 (KVTQTPGHLV…TALYLCASSQ (94 aa)) enclose the Ig-like domain. Cysteines 42 and 111 form a disulfide.

As to quaternary structure, alpha-beta TR is a heterodimer composed of an alpha and beta chain; disulfide-linked. The alpha-beta TR is associated with the transmembrane signaling CD3 coreceptor proteins to form the TR-CD3 (TcR or TCR). The assembly of alpha-beta TR heterodimers with CD3 occurs in the endoplasmic reticulum where a single alpha-beta TR heterodimer associates with one CD3D-CD3E heterodimer, one CD3G-CD3E heterodimer and one CD247 homodimer forming a stable octameric structure. CD3D-CD3E and CD3G-CD3E heterodimers preferentially associate with TR alpha and TR beta chains, respectively. The association of the CD247 homodimer is the last step of TcR assembly in the endoplasmic reticulum and is required for transport to the cell surface.

The protein resides in the cell membrane. Probable non-functional open reading frame (ORF) of V region of the variable domain of T cell receptor (TR) beta chain. Non-functional ORF generally cannot participate in the synthesis of a productive T cell receptor (TR) chain due to altered V-(D)-J or switch recombination and/or splicing site (at mRNA level) and/or conserved amino acid change (protein level). Alpha-beta T cell receptors are antigen specific receptors which are essential to the immune response and are present on the cell surface of T lymphocytes. Recognize peptide-major histocompatibility (MH) (pMH) complexes that are displayed by antigen presenting cells (APC), a prerequisite for efficient T cell adaptive immunity against pathogens. Binding of alpha-beta TR to pMH complex initiates TR-CD3 clustering on the cell surface and intracellular activation of LCK that phosphorylates the ITAM motifs of CD3G, CD3D, CD3E and CD247 enabling the recruitment of ZAP70. In turn ZAP70 phosphorylates LAT, which recruits numerous signaling molecules to form the LAT signalosome. The LAT signalosome propagates signal branching to three major signaling pathways, the calcium, the mitogen-activated protein kinase (MAPK) kinase and the nuclear factor NF-kappa-B (NF-kB) pathways, leading to the mobilization of transcription factors that are critical for gene expression and essential for T cell growth and differentiation. The T cell repertoire is generated in the thymus, by V-(D)-J rearrangement. This repertoire is then shaped by intrathymic selection events to generate a peripheral T cell pool of self-MH restricted, non-autoaggressive T cells. Post-thymic interaction of alpha-beta TR with the pMH complexes shapes TR structural and functional avidity. This Homo sapiens (Human) protein is Probable non-functional T cell receptor beta variable 23-1.